Here is a 377-residue protein sequence, read N- to C-terminus: N5-carboxyaminoimidazole ribonucleotide synthase (377 aa).

ATP contacts are provided by residues Arg93, Lys133, 138–144, 175–178, Glu183, His206, and 257–258; these read GYDGKGQ, EEFV, and NE. Positions 97–287 constitute an ATP-grasp domain; the sequence is KALLDNAGVR…QFENHLRAVC (191 aa).

It belongs to the PurK/PurT family. In terms of assembly, homodimer.

The enzyme catalyses 5-amino-1-(5-phospho-beta-D-ribosyl)imidazole + hydrogencarbonate + ATP = 5-carboxyamino-1-(5-phospho-D-ribosyl)imidazole + ADP + phosphate + 2 H(+). It functions in the pathway purine metabolism; IMP biosynthesis via de novo pathway; 5-amino-1-(5-phospho-D-ribosyl)imidazole-4-carboxylate from 5-amino-1-(5-phospho-D-ribosyl)imidazole (N5-CAIR route): step 1/2. In terms of biological role, catalyzes the ATP-dependent conversion of 5-aminoimidazole ribonucleotide (AIR) and HCO(3)(-) to N5-carboxyaminoimidazole ribonucleotide (N5-CAIR). This chain is N5-carboxyaminoimidazole ribonucleotide synthase, found in Vibrio parahaemolyticus serotype O3:K6 (strain RIMD 2210633).